Here is a 59-residue protein sequence, read N- to C-terminus: Large ribosomal subunit protein bL32 (59 aa).

Disordered stretches follow at residues 1–23 (MAVQ…DFLT) and 35–59 (EVHL…TKND). Residues 49–59 (RGKKVVKTKND) show a composition bias toward basic residues.

The protein belongs to the bacterial ribosomal protein bL32 family.

In Burkholderia ambifaria (strain MC40-6), this protein is Large ribosomal subunit protein bL32.